The following is a 452-amino-acid chain: Retinoid-inducible serine carboxypeptidase (452 aa).

Positions 1-26 (MELALRRSPVPRWLLLLPLLLGLNAG) are cleaved as a signal peptide. Residues Asn-64 and Asn-126 are each glycosylated (N-linked (GlcNAc...) asparagine). The active site involves Ser-167. Asn-362 carries N-linked (GlcNAc...) asparagine glycosylation. Catalysis depends on residues Asp-371 and His-431.

Belongs to the peptidase S10 family.

The protein localises to the secreted. In terms of biological role, may be involved in vascular wall and kidney homeostasis. This Homo sapiens (Human) protein is Retinoid-inducible serine carboxypeptidase (SCPEP1).